Here is a 36-residue protein sequence, read N- to C-terminus: Glucagon-1 (36 aa).

It belongs to the glucagon family.

Its subcellular location is the secreted. In terms of biological role, promotes hydrolysis of glycogen and lipids, and raises the blood sugar level. The sequence is that of Glucagon-1 (gcg1) from Oreochromis niloticus (Nile tilapia).